A 31-amino-acid chain; its full sequence is Cytochrome b6-f complex subunit 6 (31 aa).

Residues Ile4–Gly24 form a helical membrane-spanning segment.

The protein belongs to the PetL family. In terms of assembly, the 4 large subunits of the cytochrome b6-f complex are cytochrome b6, subunit IV (17 kDa polypeptide, PetD), cytochrome f and the Rieske protein, while the 4 small subunits are PetG, PetL, PetM and PetN. The complex functions as a dimer.

The protein resides in the plastid. The protein localises to the chloroplast thylakoid membrane. Its function is as follows. Component of the cytochrome b6-f complex, which mediates electron transfer between photosystem II (PSII) and photosystem I (PSI), cyclic electron flow around PSI, and state transitions. PetL is important for photoautotrophic growth as well as for electron transfer efficiency and stability of the cytochrome b6-f complex. The sequence is that of Cytochrome b6-f complex subunit 6 from Solanum tuberosum (Potato).